Reading from the N-terminus, the 313-residue chain is Olfactory receptor 51A4 (313 aa).

The Extracellular segment spans residues 1–27 (MSIINTSYVEITTFFLVGMPGLEYAHI). N-linked (GlcNAc...) asparagine glycosylation is present at N5. A helical transmembrane segment spans residues 28–48 (WISIPICSMYLIAILGNGTIL). Topologically, residues 49-56 (FIIKTEPS) are cytoplasmic. A helical transmembrane segment spans residues 57-77 (LHEPMYYFLSMLAMSDLGLSL). The Extracellular portion of the chain corresponds to 78 to 101 (SSLPTVLSIFLFNAPEISSNACFA). C99 and C191 are disulfide-bonded. A helical membrane pass occupies residues 102-122 (QEFFIHGFSVLESSVLLIMSF). The Cytoplasmic portion of the chain corresponds to 123–141 (DRFLAIHNPLRYTSILTTV). The helical transmembrane segment at 142 to 162 (RVAQIGIVFSFKSMLLVLPFP) threads the bilayer. The Extracellular segment spans residues 163–198 (FTLRNLRYCKKNQLSHSYCLHQDVMKLACSDNRIDV). A helical transmembrane segment spans residues 199–218 (IYGFFGALCLMVDFILIAVS). Topologically, residues 219–238 (YTLILKTVLGIASKKEQLKA) are cytoplasmic. Residues 239 to 259 (LNTCVSHICAVIIFYLPIINL) form a helical membrane-spanning segment. Topologically, residues 260–274 (AVVHRFARHVSPLIN) are extracellular. Residues 275–295 (VLMANVLLLVPPLTNPIVYCV) form a helical membrane-spanning segment. Residues 296–313 (KTKQIRVRVVAKLCQRKI) lie on the Cytoplasmic side of the membrane.

The protein belongs to the G-protein coupled receptor 1 family.

It localises to the cell membrane. Functionally, odorant receptor. In Homo sapiens (Human), this protein is Olfactory receptor 51A4 (OR51A4).